The sequence spans 432 residues: Cyclin-A2 (432 aa).

An N-acetylmethionine modification is found at Met-1. Ser-5 bears the Phosphoserine mark. Disordered stretches follow at residues 26-45 (LQED…QQPR) and 55-75 (SGNP…VAPL). The residue at position 55 (Ser-55) is a Phosphoserine.

It belongs to the cyclin family. Cyclin AB subfamily. As to quaternary structure, interacts with the CDK1 and CDK2 protein kinases to form serine/threonine kinase holoenzyme complexes. Interacts with CDK1 (hyperphosphorylated form in G1 and underphosphorylated forms in S and G2). Interacts with CDK2; the interaction increases from G1 to G2. Interacts (associated with CDK2 but not with CDK1) with SCAPER; regulates the activity of CCNA2/CDK2 by transiently maintaining CCNA2 in the cytoplasm. Forms a ternary complex with CDK2 and CDKN1B; CDKN1B inhibits the kinase activity of CDK2 through conformational rearrangements. Interacts with INCA1. In terms of assembly, (Microbial infection) Interacts with human cytomegalovirus protein UL32. Post-translationally, polyubiquitinated via 'Lys-11'-linked ubiquitin by the anaphase-promoting complex (APC/C), leading to its degradation by the proteasome. Deubiquitinated and stabilized by USP37 enables entry into S phase. Ubiquitinated during the G1 phase by the SCF(FBXO31) complex, leading to its proteasomal degradation.

It is found in the nucleus. The protein resides in the cytoplasm. Cyclin which controls both the G1/S and the G2/M transition phases of the cell cycle. Functions through the formation of specific serine/threonine protein kinase holoenzyme complexes with the cyclin-dependent protein kinases CDK1 or CDK2. The cyclin subunit confers the substrate specificity of these complexes and differentially interacts with and activates CDK1 and CDK2 throughout the cell cycle. This is Cyclin-A2 from Homo sapiens (Human).